Consider the following 536-residue polypeptide: Inactive phospholipase D5 (536 aa).

Residues 69–89 (IVIFALVCCFAILVALIFSAV) traverse the membrane as a helical segment. Asn121 carries N-linked (GlcNAc...) asparagine glycosylation. The 28-residue stretch at 215–242 (NKGRLQSSFWIVDKQHVYIGSAGLDWQS) folds into the PLD phosphodiesterase 1 domain. Residue Asn302 is glycosylated (N-linked (GlcNAc...) asparagine). The PLD phosphodiesterase 2 domain occupies 434–460 (FPRLNRNKYMVTDGAAYIGNFDWVGND).

Belongs to the phospholipase D family.

The protein localises to the membrane. The polypeptide is Inactive phospholipase D5 (PLD5) (Homo sapiens (Human)).